A 301-amino-acid chain; its full sequence is Runt-related transcription factor rnt-1 (301 aa).

The Runt domain maps to 10–138; the sequence is NFIEQQPAPA…TVDGPRDARI (129 aa). Interaction with DNA regions lie at residues 40 to 44, 95 to 103, and 128 to 137; these read RSNKS, RFVGRSGRG, and VTVDGPRDAR. Chloride contacts are provided by Arg99 and Val130. The tract at residues 237–301 is disordered; that stretch reads PSIFITPTSD…SSSPTIWRPF (65 aa). Position 255 is a phosphoserine (Ser255). A compositionally biased stretch (polar residues) spans 255 to 276; sequence SPRSITKSSETSINLIQETPES. Residues 285-301 show a composition bias toward low complexity; the sequence is VSITSSNSSSPTIWRPF.

In terms of assembly, interacts with CBFbeta homolog bro-1; acts to increase the affinity and specificity of interaction of rnt-1 with DNA. Interacts with TGF-beta pathway protein sma-4. Post-translationally, may be ubiquitinated in order to be targeted for proteasome-mediated degradation in intestinal cells. May be phosphorylated by members of the p38 MAP kinase pathway. In terms of tissue distribution, expressed in the intestine.

It is found in the nucleus. In terms of biological role, transcription factor. Binds to regulatory DNA sequences in order to modulate transcription; negatively autoregulates its own expression, perhaps dependent upon CBF beta homolog bro-1. Promotes proliferation, and prevents differentiation, of seam cells, a stem cell-like lineage, acting in concert with bro-1. Required for controlling cell proliferation in the seam cells, perhaps by repressing expression of cyclin-dependent kinase inhibitor cki-1. Inhibition of seam cell differentiation is regulated by rnt-1 and bro-1, perhaps acting upstream of pop-1, by antagonizing pop-1 repressor function. Required for asymmetrical cell divisions in the lineage derived from a posterior embryonic seam cell, the T blast cell, and for asymmetric expression of zinc finger protein tlp-1. Regulates growth and male tail development. Involved in the oxidative stress response, perhaps downstream of the p38 MAP kinase pathway, and acting as part of a negative feedback loop via a transcriptional target gene, tyrosine-protein phosphatase vhp-1. Positively modulates dopaminergic signaling in a non-cell autonomous manner. May be involved in TGF-beta signaling. This chain is Runt-related transcription factor rnt-1, found in Caenorhabditis elegans.